Here is a 556-residue protein sequence, read N- to C-terminus: Dihydroxy-acid dehydratase (556 aa).

A [2Fe-2S] cluster-binding site is contributed by Cys47. Asp79 provides a ligand contact to Mg(2+). Position 120 (Cys120) interacts with [2Fe-2S] cluster. Positions 121 and 122 each coordinate Mg(2+). Residue Lys122 is modified to N6-carboxylysine. Residue Cys192 participates in [2Fe-2S] cluster binding. Residue Glu444 participates in Mg(2+) binding. Ser470 acts as the Proton acceptor in catalysis.

Belongs to the IlvD/Edd family. As to quaternary structure, homodimer. [2Fe-2S] cluster serves as cofactor. The cofactor is Mg(2+).

The enzyme catalyses (2R)-2,3-dihydroxy-3-methylbutanoate = 3-methyl-2-oxobutanoate + H2O. It catalyses the reaction (2R,3R)-2,3-dihydroxy-3-methylpentanoate = (S)-3-methyl-2-oxopentanoate + H2O. It functions in the pathway amino-acid biosynthesis; L-isoleucine biosynthesis; L-isoleucine from 2-oxobutanoate: step 3/4. It participates in amino-acid biosynthesis; L-valine biosynthesis; L-valine from pyruvate: step 3/4. Its function is as follows. Functions in the biosynthesis of branched-chain amino acids. Catalyzes the dehydration of (2R,3R)-2,3-dihydroxy-3-methylpentanoate (2,3-dihydroxy-3-methylvalerate) into 2-oxo-3-methylpentanoate (2-oxo-3-methylvalerate) and of (2R)-2,3-dihydroxy-3-methylbutanoate (2,3-dihydroxyisovalerate) into 2-oxo-3-methylbutanoate (2-oxoisovalerate), the penultimate precursor to L-isoleucine and L-valine, respectively. The chain is Dihydroxy-acid dehydratase from Prochlorococcus marinus (strain MIT 9313).